An 880-amino-acid chain; its full sequence is Pyruvate, phosphate dikinase (880 aa).

The interval 1-348 is N-terminal; sequence MNKLIYYFGN…LYILQTRTAK (348 aa). Arg-97 contributes to the ATP binding site. A linker 1 region spans residues 349–405; sequence RTAIAAINIAVQMVEEKLISKEQALMRIDPESLNQLLHTRIDYSKKLTAIAEGLPAS. The segment at 406 to 503 is central; that stretch reads PGAATGIVVF…VIKQGDIITI (98 aa). Phosphothreonine; by PDRP1 is present on Thr-458. His-460 acts as the Tele-phosphohistidine intermediate in catalysis. The interval 504 to 538 is linker 2; it reads DGGSGKIFLGEMPLIQPTFSEESTLILDWADEISS. Residues 539-879 form a C-terminal region; it reads LKVRANAETV…AAAQAKIKQG (341 aa). Substrate is bound by residues Arg-566, Arg-622, Glu-750, Gly-771, Thr-772, Asn-773, and Asp-774. Residue Glu-750 coordinates Mg(2+). Asp-774 provides a ligand contact to Mg(2+). Cys-836 (proton donor) is an active-site residue.

The protein belongs to the PEP-utilizing enzyme family. As to quaternary structure, homodimer. Requires Mg(2+) as cofactor. In terms of processing, phosphorylation of Thr-458 in the dark inactivates the enzyme. Dephosphorylation upon light stimulation reactivates the enzyme.

It carries out the reaction pyruvate + phosphate + ATP = phosphoenolpyruvate + AMP + diphosphate + H(+). Its activity is regulated as follows. Activated by light-induced dephosphorylation. Inhibited by dark-induced phosphorylation. Both reactions are catalyzed by PDRP1. Catalyzes the reversible phosphorylation of pyruvate and phosphate. This chain is Pyruvate, phosphate dikinase (ppdK), found in Rickettsia typhi (strain ATCC VR-144 / Wilmington).